Consider the following 201-residue polypeptide: Protease (201 aa).

Residues His-56, Asp-73, and Cys-121 contribute to the active site.

It belongs to the peptidase C5 family. Interacts with protease cofactor pVI-C; this interaction is necessary for protease activation.

It localises to the virion. It is found in the host nucleus. The enzyme catalyses Cleaves proteins of the adenovirus and its host cell at two consensus sites: -Yaa-Xaa-Gly-Gly-|-Xaa- and -Yaa-Xaa-Gly-Xaa-|-Gly- (in which Yaa is Met, Ile or Leu, and Xaa is any amino acid).. Requires DNA and protease cofactor for maximal activation. Inside nascent virions, becomes partially activated by binding to the viral DNA, allowing it to cleave the cofactor that binds to the protease and fully activates it. Actin, like the viral protease cofactor, seems to act as a cofactor in the cleavage of cytokeratin 18 and of actin itself. In terms of biological role, cleaves viral precursor proteins (pTP, pIIIa, pVI, pVII, pVIII, and pX) inside newly assembled particles giving rise to mature virions. Protease complexed to its cofactor slides along the viral DNA to specifically locate and cleave the viral precursors. Mature virions have a weakened organization compared to the unmature virions, thereby facilitating subsequent uncoating. Without maturation, the particle lacks infectivity and is unable to uncoat. Late in adenovirus infection, in the cytoplasm, may participate in the cytoskeleton destruction. Cleaves host cell cytoskeletal keratins K7 and K18. This Homo sapiens (Human) protein is Protease.